A 101-amino-acid polypeptide reads, in one-letter code: Apolipoprotein C-II (101 aa).

The N-terminal stretch at 1 to 22 (MGIRYLLVLVLVLLVLGCEVQG) is a signal peptide. The segment at 66–74 (TMDEKIREI) is lipid binding. A lipoprotein lipase cofactor region spans residues 78–101 (STAAVSTYAGIFTDQLLSMLKGDQ).

Belongs to the apolipoprotein C2 family. Post-translationally, proapolipoprotein C-II is synthesized as a sialic acid containing glycoprotein which is subsequently desialylated prior to its proteolytic processing. Proapolipoprotein C-II, the major form found in plasma undergoes proteolytic cleavage of its N-terminal hexapeptide to generate apolipoprotein C-II, which occurs as the minor form in plasma.

It is found in the secreted. In terms of biological role, component of chylomicrons, very low-density lipoproteins (VLDL), low-density lipoproteins (LDL), and high-density lipoproteins (HDL) in plasma. Plays an important role in lipoprotein metabolism as an activator of lipoprotein lipase. Both proapolipoprotein C-II and apolipoprotein C-II can activate lipoprotein lipase. The sequence is that of Apolipoprotein C-II (APOC2) from Leptonychotes weddellii (Weddell seal).